A 302-amino-acid polypeptide reads, in one-letter code: Small ribosomal subunit protein uS2 (302 aa).

Positions 275-302 are disordered; it reads EGEGESEAEPVVAKKKPVRAKRPAVKAE. Residues 287-302 are compositionally biased toward basic residues; the sequence is AKKKPVRAKRPAVKAE.

Belongs to the universal ribosomal protein uS2 family.

The protein is Small ribosomal subunit protein uS2 of Opitutus terrae (strain DSM 11246 / JCM 15787 / PB90-1).